We begin with the raw amino-acid sequence, 177 residues long: Large ribosomal subunit protein uL6 (177 aa).

It belongs to the universal ribosomal protein uL6 family. In terms of assembly, part of the 50S ribosomal subunit.

Functionally, this protein binds to the 23S rRNA, and is important in its secondary structure. It is located near the subunit interface in the base of the L7/L12 stalk, and near the tRNA binding site of the peptidyltransferase center. The protein is Large ribosomal subunit protein uL6 of Erythrobacter litoralis (strain HTCC2594).